The sequence spans 354 residues: GDSL esterase/lipase At5g03820 (354 aa).

The N-terminal stretch at 1–24 (MKMFIIMLMTFSVIACFYAGVGTG) is a signal peptide. The active-site Nucleophile is Ser37. N-linked (GlcNAc...) asparagine glycosylation is found at Asn66, Asn100, Asn237, Asn256, Asn257, Asn261, and Asn321. Catalysis depends on residues Asp329 and His332.

It belongs to the 'GDSL' lipolytic enzyme family.

Its subcellular location is the secreted. The polypeptide is GDSL esterase/lipase At5g03820 (Arabidopsis thaliana (Mouse-ear cress)).